A 430-amino-acid polypeptide reads, in one-letter code: Enolase (430 aa).

Gln165 provides a ligand contact to (2R)-2-phosphoglycerate. Glu207 (proton donor) is an active-site residue. Mg(2+) contacts are provided by Asp244, Glu287, and Asp314. 4 residues coordinate (2R)-2-phosphoglycerate: Lys339, Arg368, Ser369, and Lys390. Residue Lys339 is the Proton acceptor of the active site.

It belongs to the enolase family. In terms of assembly, component of the RNA degradosome, a multiprotein complex involved in RNA processing and mRNA degradation. The cofactor is Mg(2+).

It is found in the cytoplasm. The protein localises to the secreted. It localises to the cell surface. It catalyses the reaction (2R)-2-phosphoglycerate = phosphoenolpyruvate + H2O. It functions in the pathway carbohydrate degradation; glycolysis; pyruvate from D-glyceraldehyde 3-phosphate: step 4/5. Catalyzes the reversible conversion of 2-phosphoglycerate (2-PG) into phosphoenolpyruvate (PEP). It is essential for the degradation of carbohydrates via glycolysis. In Stenotrophomonas maltophilia (strain R551-3), this protein is Enolase.